A 417-amino-acid chain; its full sequence is Serine hydroxymethyltransferase (417 aa).

Residues L121 and 125–127 (GHL) contribute to the (6S)-5,6,7,8-tetrahydrofolate site. K229 bears the N6-(pyridoxal phosphate)lysine mark. Residue 355-357 (SPF) coordinates (6S)-5,6,7,8-tetrahydrofolate.

This sequence belongs to the SHMT family. Homodimer. Pyridoxal 5'-phosphate is required as a cofactor.

Its subcellular location is the cytoplasm. It carries out the reaction (6R)-5,10-methylene-5,6,7,8-tetrahydrofolate + glycine + H2O = (6S)-5,6,7,8-tetrahydrofolate + L-serine. It functions in the pathway one-carbon metabolism; tetrahydrofolate interconversion. The protein operates within amino-acid biosynthesis; glycine biosynthesis; glycine from L-serine: step 1/1. Catalyzes the reversible interconversion of serine and glycine with tetrahydrofolate (THF) serving as the one-carbon carrier. This reaction serves as the major source of one-carbon groups required for the biosynthesis of purines, thymidylate, methionine, and other important biomolecules. Also exhibits THF-independent aldolase activity toward beta-hydroxyamino acids, producing glycine and aldehydes, via a retro-aldol mechanism. The protein is Serine hydroxymethyltransferase of Klebsiella pneumoniae (strain 342).